The primary structure comprises 639 residues: Serine protease HtrA-like (639 aa).

Basic and acidic residues-rich tracts occupy residues Met-1 to Gln-13, Tyr-21 to Gln-75, Gln-106 to Ser-187, and Lys-195 to Lys-205. Positions Met-1 to Thr-262 are disordered. The segment covering Ala-206–Tyr-219 has biased composition (polar residues). 2 stretches are compositionally biased toward basic and acidic residues: residues Thr-220–Lys-235 and Asn-245–Thr-262. The chain crosses the membrane as a helical span at residues Ile-277 to Met-297. Residues His-374, Asp-404, and Ser-489 each act as charge relay system in the active site. Positions Glu-527–Gly-629 constitute a PDZ domain.

This sequence belongs to the peptidase S1C family.

The protein localises to the cell membrane. The sequence is that of Serine protease HtrA-like from Staphylococcus haemolyticus (strain JCSC1435).